A 1910-amino-acid polypeptide reads, in one-letter code: Endoribonuclease dcr-1 (1910 aa).

The Helicase ATP-binding domain occupies 20 to 201; it reads LLDKATKKNT…KLMEQLKKLE (182 aa). 33 to 40 provides a ligand contact to ATP; it reads LGTGSGKT. Residues 145 to 148 carry the DEAH box motif; the sequence is DECH. The Helicase C-terminal domain maps to 371 to 542; it reads EFQKERMKLE…TVNNPIEDDS (172 aa). The Dicer dsRNA-binding fold domain maps to 571 to 667; the sequence is AIALINRYCS…LPKGRESIAK (97 aa). The PAZ domain maps to 845 to 1003; that stretch reads YVSEVVANME…LVPELMDIHP (159 aa). Disordered regions lie at residues 951–988, 1227–1248, and 1272–1309; these read RIQNQPRRSRTVSNSSTSNIPQASASDSKESNTSVPHS, TASSSLSQTVQESTVSPPKQLT, and LEMSEDMEKPRRLEDTVNLEDYGDDQENQEDENTPTNF. 2 stretches are compositionally biased toward polar residues: residues 970–988 and 1227–1245; these read IPQASASDSKESNTSVPHS and TASSSLSQTVQESTVSPPK. Positions 1245–1280 form a coiled coil; sequence KQLTKEEEQFKKLQNDLLKQAKERLEALEMSEDMEK. Residues 1272 to 1286 show a composition bias toward basic and acidic residues; that stretch reads LEMSEDMEKPRRLED. Over residues 1288–1304 the composition is skewed to acidic residues; that stretch reads VNLEDYGDDQENQEDEN. 2 consecutive RNase III domains span residues 1381-1589 and 1643-1805; these read VSHI…LTLG and FTQL…LDSG. E1682, D1791, and E1794 together coordinate Mg(2+). A DRBM domain is found at 1833–1896; that stretch reads SPIRELMEFE…AKRALKYLHQ (64 aa).

It belongs to the helicase family. Dicer subfamily. In terms of assembly, component of the ERI/DICER complex at least composed of dcr-1, rrf-3 and eri-1. Interacts with pir-1. Mg(2+) is required as a cofactor. Mn(2+) serves as cofactor.

Component of the ERI/DICER complex which is involved in processing amplified double-stranded RNA (dsRNA) intermediates during small-RNA-mediated gene-silencing or RNA interference (RNAi). Involved in cleaving dsRNA in the RNAi pathway. It produces 21 to 23 bp dsRNAs (siRNAs) which target the selective destruction of homologous RNAs. Seems to process the precursor of the small temporal RNA let-7 which is involved in developmental timing. Required for avoidance behavior induced by small RNAs derived from pathogenic bacteria such as P.aeruginosa. Involved in innate immunity through its role in small RNA processing. Functionally, tDCR-1 acts as a deoxyribonuclease (DNase) initiating DNA fragmentation during apoptosis, upstream of nucleases cps-6, crn-2 and nuc-1. The sequence is that of Endoribonuclease dcr-1 from Caenorhabditis elegans.